Consider the following 122-residue polypeptide: UPF0102 protein CLL_A1253 (122 aa).

Belongs to the UPF0102 family.

The sequence is that of UPF0102 protein CLL_A1253 from Clostridium botulinum (strain Eklund 17B / Type B).